The chain runs to 206 residues: Ribosomal RNA small subunit methyltransferase G (206 aa).

Residues glycine 73, leucine 78, 124–125 (VE), and arginine 139 contribute to the S-adenosyl-L-methionine site.

This sequence belongs to the methyltransferase superfamily. RNA methyltransferase RsmG family.

It localises to the cytoplasm. The catalysed reaction is guanosine(527) in 16S rRNA + S-adenosyl-L-methionine = N(7)-methylguanosine(527) in 16S rRNA + S-adenosyl-L-homocysteine. Specifically methylates the N7 position of guanine in position 527 of 16S rRNA. In Edwardsiella ictaluri (strain 93-146), this protein is Ribosomal RNA small subunit methyltransferase G.